The sequence spans 345 residues: Trace amine-associated receptor 6 (345 aa).

At 1–32 (MGSNSSPPAVLQLCYENVNGSCVKTPYSPGPR) the chain is on the extracellular side. A glycan (N-linked (GlcNAc...) asparagine) is linked at N19. 2 disulfides stabilise this stretch: C22/C186 and C105/C190. Residues 33–53 (VLLYAVFGFGAVLAVFGNLLV) traverse the membrane as a helical segment. The Cytoplasmic segment spans residues 54-68 (MISILHFKQLHSPTN). The helical transmembrane segment at 69–89 (FLIASLACADFWVGVSVMPFS) threads the bilayer. The Extracellular segment spans residues 90–107 (MVRSIESCWYFGRSFCTF). The chain crosses the membrane as a helical span at residues 108–128 (HTCCDVAFCYSSLFHLSFISI). The Cytoplasmic portion of the chain corresponds to 129-147 (DRYIAVTDPLVYPTKFTVS). A helical transmembrane segment spans residues 148 to 168 (VSGICISISWILPLAYSGAVF). Residues 169–202 (YTGVYADGLEEVSDAVNCVGGCQVVVNQNWVLID) lie on the Extracellular side of the membrane. Residues 203-223 (FLSFLIPTLVMIILYGNIFLV) form a helical membrane-spanning segment. At 224–259 (ARQQAKKIETVGNKAESSSESYKARVARRERKAAKT) the chain is on the cytoplasmic side. A helical transmembrane segment spans residues 260-276 (LGITVVAFMISWLPYSI). Residues 277–282 (DSLVDA) are Extracellular-facing. Residues 283–302 (FMGFITPAYIYEICVWCAYY) traverse the membrane as a helical segment. At 303-345 (NSAMNPLIYALFYPWFKKAIKVIMSGQVFKNSSATMNLFSEQI) the chain is on the cytoplasmic side.

This sequence belongs to the G-protein coupled receptor 1 family.

Its subcellular location is the cell membrane. Olfactory receptor specific for trace amines, such as beta-phenylethylamine (beta-PEA). Trace amine compounds are enriched in animal body fluids and act on trace amine-associated receptors (TAARs) to elicit both intraspecific and interspecific innate behaviors. Beta-PEA-binding causes a conformation change that triggers signaling via G(s)-class of G alpha proteins (GNAL or GNAS). The polypeptide is Trace amine-associated receptor 6 (Taar6) (Rattus norvegicus (Rat)).